Consider the following 410-residue polypeptide: Phosphoglycerate kinase (410 aa).

Substrate contacts are provided by residues aspartate 19 to asparagine 21, arginine 34, histidine 57 to lysine 60, arginine 114, and arginine 154. Residues glutamate 332 and glycine 358 to serine 361 contribute to the ATP site.

This sequence belongs to the phosphoglycerate kinase family. As to quaternary structure, homodimer.

The protein resides in the cytoplasm. It carries out the reaction (2R)-3-phosphoglycerate + ATP = (2R)-3-phospho-glyceroyl phosphate + ADP. The protein operates within carbohydrate degradation; glycolysis; pyruvate from D-glyceraldehyde 3-phosphate: step 2/5. The chain is Phosphoglycerate kinase (pgk) from Pyrococcus furiosus (strain ATCC 43587 / DSM 3638 / JCM 8422 / Vc1).